Here is a 343-residue protein sequence, read N- to C-terminus: Methionine import ATP-binding protein MetN (343 aa).

In terms of domain architecture, ABC transporter spans 2–241; the sequence is IKLFHINKIF…PKTPIAQAFI (240 aa). 38-45 is a binding site for ATP; it reads GSSGAGKS.

It belongs to the ABC transporter superfamily. Methionine importer (TC 3.A.1.24) family. In terms of assembly, the complex is composed of two ATP-binding proteins (MetN), two transmembrane proteins (MetI) and a solute-binding protein (MetQ).

The protein localises to the cell inner membrane. It catalyses the reaction L-methionine(out) + ATP + H2O = L-methionine(in) + ADP + phosphate + H(+). The enzyme catalyses D-methionine(out) + ATP + H2O = D-methionine(in) + ADP + phosphate + H(+). In terms of biological role, part of the ABC transporter complex MetNIQ involved in methionine import. Responsible for energy coupling to the transport system. The protein is Methionine import ATP-binding protein MetN of Photorhabdus laumondii subsp. laumondii (strain DSM 15139 / CIP 105565 / TT01) (Photorhabdus luminescens subsp. laumondii).